The primary structure comprises 848 residues: Dynein axonemal intermediate chain 4 (848 aa).

2 disordered regions span residues 345 to 370 (SKAN…SETS) and 431 to 464 (EPEP…IHAE). Over residues 359–370 (PGSTTEKNSETS) the composition is skewed to polar residues. The segment covering 442 to 456 (ESAKHEEVEEESKKE) has biased composition (basic and acidic residues). WD repeat units follow at residues 534–574 (QSPY…NVPV), 583–631 (KHLG…DCYD), 658–698 (SRQA…QYLD), 702–742 (GHKG…PSLS), 745–784 (PATS…LDPL), and 790–829 (NPGI…TVLE).

In terms of assembly, part of the multisubunit axonemal dynein complex formed at least of two heavy chains and a number of intermediate and light chains. Associated with axonemal dynein subunits such as, DNAH2, DNAI3, and DYNLT1. Interacts with DYNLT1.

It localises to the cytoplasm. The protein localises to the cytoskeleton. The protein resides in the flagellum axoneme. It is found in the cilium axoneme. Its subcellular location is the dynein axonemal particle. Its function is as follows. Plays a critical role in the assembly of axonemal dynein complex, thereby playing a role in ciliary motility. The protein is Dynein axonemal intermediate chain 4 of Homo sapiens (Human).